We begin with the raw amino-acid sequence, 587 residues long: Inorganic phosphate transporter PHO84 (587 aa).

At 1–67 (MSSVNKDTIH…FGWQQVKTIS (67 aa)) the chain is on the extracellular side. Residue Lys6 forms a Glycyl lysine isopeptide (Lys-Gly) (interchain with G-Cter in ubiquitin) linkage. The chain crosses the membrane as a helical span at residues 68–88 (IAGVGFLTDSYDIFAINLGIT). The Cytoplasmic portion of the chain corresponds to 89–108 (MMSYVYWHGSMPGPSQTLLK). Residues 109–129 (VSTSVGTVIGQFGFGTLADIV) form a helical membrane-spanning segment. Topologically, residues 130 to 133 (GRKR) are extracellular. The helical transmembrane segment at 134–154 (IYGMELIIMIVCTILQTTVAH) threads the bilayer. At 155–156 (SP) the chain is on the cytoplasmic side. The helical transmembrane segment at 157–177 (AINFVAVLTFYRIVMGIGIGG) threads the bilayer. Topologically, residues 178-201 (DYPLSSIITSEFATTKWRGAIMGA) are extracellular. A helical transmembrane segment spans residues 202–222 (VFANQAWGQISGGIIALILVA). Topologically, residues 223 to 250 (AYKGELEYANSGAECDARCQKACDQMWR) are cytoplasmic. The helical transmembrane segment at 251–271 (ILIGLGTVLGLACLYFRLTIP) threads the bilayer. Over 272-345 (ESPRYQLDVN…RHFGQWKYGK (74 aa)) the chain is Extracellular. A Glycyl lysine isopeptide (Lys-Gly) (interchain with G-Cter in ubiquitin) cross-link involves residue Lys298. Thr302 carries the post-translational modification Phosphothreonine. 2 positions are modified to phosphoserine: Ser303 and Ser316. Thr317 carries the post-translational modification Phosphothreonine. Phosphoserine is present on Ser321. The helical transmembrane segment at 346 to 366 (ILLGTAGSWFTLDVAFYGLSL) threads the bilayer. Residues 367–395 (NSAVILQTIGYAGSKNVYKKLYDTAVGNL) are Cytoplasmic-facing. The helical transmembrane segment at 396–416 (ILICAGSLPGYWVSVFTVDII) threads the bilayer. The Extracellular portion of the chain corresponds to 417–419 (GRK). A helical membrane pass occupies residues 420-440 (PIQLAGFIILTALFCVIGFAY). At 441 to 442 (HK) the chain is on the cytoplasmic side. A helical membrane pass occupies residues 443-463 (LGDHGLLALYVICQFFQNFGP). Topologically, residues 464–485 (NTTTFIVPGECFPTRYRSTAHG) are extracellular. The chain crosses the membrane as a helical span at residues 486-506 (ISAASGKVGAIIAQTALGTLI). Residues 507-522 (DHNCARDGKPTNCWLP) are Cytoplasmic-facing. A helical transmembrane segment spans residues 523 to 543 (HVMEIFALFMLLGIFTTLLIP). The Extracellular segment spans residues 544 to 587 (ETKRKTLEEINELYHDEIDPATLNFRNKNNDIESSSPSQLQHEA). Residues 568-587 (FRNKNNDIESSSPSQLQHEA) form a disordered region. Ser577, Ser579, and Ser581 each carry phosphoserine.

It belongs to the major facilitator superfamily. Phosphate:H(+) symporter (TC 2.A.1.9) family. May function as a monomer. Post-translationally, phosphorylated; phosphorylation increases after phosphate addition to the growth medium. Ubiquitinated in a phosphate-dependent manner; ubiquitination may influence the trafficking of PHO84 to the cell membrane and serve as a signal for endocytosis and internalization.

The protein localises to the cell membrane. Its subcellular location is the vacuole. The enzyme catalyses phosphate(in) + H(+)(in) = phosphate(out) + H(+)(out). It carries out the reaction Mn(2+)(in) = Mn(2+)(out). It catalyses the reaction Zn(2+)(in) = Zn(2+)(out). The catalysed reaction is Cu(2+)(in) = Cu(2+)(out). The enzyme catalyses Co(2+)(in) = Co(2+)(out). Its activity is regulated as follows. Transport activity is inhibited in the presence of the protonophore carbonylcyanide m-chlorophenylhydrazone. Transport activity is inhibited by glycerol-3-phosphate. Transport activity is inhibited by phosphonoacetic acid. Signaling activity is stimulated by glycerol-3-phosphate which acts as a nontransported PHO84 agonist that can trigger PKA signaling. Signaling activity is stimulated by arsenate. Functionally, proton-coupled high-affinity transporter for external inorganic phosphate. Acts as a transceptor, a membrane protein that in addition to its transporter activity also possesses receptor-like signaling activity; mediates activation of the protein kinase A (PKA) pathway targets during growth induction, triggered by phosphate addition to cells growth-arrested due to previous phosphate starvation. Is not an essential protein, since constitutive, low affinity phosphate transporters exist in yeast. Can function as a low affinity metal transporter that transports manganese, zinc, cobalt and copper. Plays a role in manganese homeostasis predominantly under manganese surplus conditions. This Saccharomyces cerevisiae (strain ATCC 204508 / S288c) (Baker's yeast) protein is Inorganic phosphate transporter PHO84 (PHO84).